Here is a 208-residue protein sequence, read N- to C-terminus: Pectinesterase inhibitor 6 (208 aa).

The signal sequence occupies residues 1–30; that stretch reads MTSSSSSPITFTLLLLLSLLVALNPNPSLA. Cysteines 53 and 62 form a disulfide. N-linked (GlcNAc...) asparagine glycosylation is found at Asn-54 and Asn-75. Residues Cys-118 and Cys-165 are joined by a disulfide bond.

The protein belongs to the PMEI family.

The protein localises to the secreted. It is found in the extracellular space. Its subcellular location is the apoplast. In terms of biological role, pectin methylesterase (PME) inhibitor that targets PME from seeds and modulates PME activity and pectin methylesterification during seed germination. Promotes mucilage release by limiting methylesterification of homogalacturonan in seed coat epidermal cells. In Arabidopsis thaliana (Mouse-ear cress), this protein is Pectinesterase inhibitor 6.